We begin with the raw amino-acid sequence, 156 residues long: 6,7-dimethyl-8-ribityllumazine synthase (156 aa).

Residues Phe-25, 59–61 (AFE), and 83–85 (AVI) contribute to the 5-amino-6-(D-ribitylamino)uracil site. 88 to 89 (GT) contacts (2S)-2-hydroxy-3-oxobutyl phosphate. His-91 acts as the Proton donor in catalysis. Phe-116 is a binding site for 5-amino-6-(D-ribitylamino)uracil. Residue Arg-130 coordinates (2S)-2-hydroxy-3-oxobutyl phosphate.

The protein belongs to the DMRL synthase family.

It catalyses the reaction (2S)-2-hydroxy-3-oxobutyl phosphate + 5-amino-6-(D-ribitylamino)uracil = 6,7-dimethyl-8-(1-D-ribityl)lumazine + phosphate + 2 H2O + H(+). It participates in cofactor biosynthesis; riboflavin biosynthesis; riboflavin from 2-hydroxy-3-oxobutyl phosphate and 5-amino-6-(D-ribitylamino)uracil: step 1/2. Catalyzes the formation of 6,7-dimethyl-8-ribityllumazine by condensation of 5-amino-6-(D-ribitylamino)uracil with 3,4-dihydroxy-2-butanone 4-phosphate. This is the penultimate step in the biosynthesis of riboflavin. This is 6,7-dimethyl-8-ribityllumazine synthase from Desulfovibrio desulfuricans (strain ATCC 27774 / DSM 6949 / MB).